The primary structure comprises 311 residues: Glutaminase (311 aa).

Substrate is bound by residues Ser-66, Asn-116, Glu-162, Asn-169, Tyr-193, Tyr-245, and Val-263.

The protein belongs to the glutaminase family. Homotetramer.

The enzyme catalyses L-glutamine + H2O = L-glutamate + NH4(+). The polypeptide is Glutaminase (Rhodopseudomonas palustris (strain ATCC BAA-98 / CGA009)).